Consider the following 388-residue polypeptide: DNA replication and repair protein RecF (388 aa).

30–37 is an ATP binding site; the sequence is GNNAQGKS.

Belongs to the RecF family.

It is found in the cytoplasm. Functionally, the RecF protein is involved in DNA metabolism; it is required for DNA replication and normal SOS inducibility. RecF binds preferentially to single-stranded, linear DNA. It also seems to bind ATP. The chain is DNA replication and repair protein RecF from Picosynechococcus sp. (strain ATCC 27264 / PCC 7002 / PR-6) (Agmenellum quadruplicatum).